The chain runs to 661 residues: Peroxisomal acyl-coenzyme A oxidase 1 (661 aa).

Ser-26 carries the phosphoserine modification. Residue Lys-65 is modified to N6-acetyllysine. Lys-89 and Lys-90 each carry N6-succinyllysine. Residue Thr-139 participates in FAD binding. The residue at position 159 (Lys-159) is an N6-succinyllysine. An FAD-binding site is contributed by Gly-178. An N6-acetyllysine modification is found at Lys-216. An N6-succinyllysine modification is found at Lys-241. Lys-255, Lys-267, and Lys-272 each carry N6-acetyllysine. Lys-349 is subject to N6-succinyllysine. Residue Glu-421 is the Proton acceptor of the active site. Residues Lys-437 and Lys-446 each carry the N6-acetyllysine; alternate modification. Residues Lys-437 and Lys-446 each carry the N6-succinyllysine; alternate modification. Lys-500 carries the N6-acetyllysine modification. Lys-512 is subject to N6-acetyllysine; alternate. Lys-512 carries the N6-succinyllysine; alternate modification. Lys-542 carries the post-translational modification N6-succinyllysine. The residue at position 637 (Lys-637) is an N6-acetyllysine; alternate. Position 637 is an N6-succinyllysine; alternate (Lys-637). Residue Lys-643 is modified to N6-succinyllysine. Phosphoserine is present on Ser-649. Lys-652 carries the N6-acetyllysine modification. Lys-655 carries the N6-succinyllysine modification. The Microbody targeting signal motif lies at Ser-659–Leu-661.

The protein belongs to the acyl-CoA oxidase family. As to quaternary structure, homodimer. Interacts with LONP2. It depends on FAD as a cofactor. In terms of tissue distribution, highest levels of isoform 1 are found in liver and kidney while highest levels of isoform 2 are found in white adipose tissue. Isoform 1 is expressed at higher levels than isoform 2 in liver and kidney while isoform 2 is expressed at higher levels in brain, heart, lung, muscle, white adipose tissue and testis.

It localises to the peroxisome. The catalysed reaction is a 2,3-saturated acyl-CoA + O2 = a (2E)-enoyl-CoA + H2O2. The enzyme catalyses hexadecanoyl-CoA + O2 = (2E)-hexadecenoyl-CoA + H2O2. It carries out the reaction dodecanoyl-CoA + O2 = (2E)-dodecenoyl-CoA + H2O2. It catalyses the reaction octanoyl-CoA + O2 = (2E)-octenoyl-CoA + H2O2. The catalysed reaction is decanoyl-CoA + O2 = (2E)-decenoyl-CoA + H2O2. The enzyme catalyses tetradecanoyl-CoA + O2 = (2E)-tetradecenoyl-CoA + H2O2. It carries out the reaction hexadecanedioyl-CoA + O2 = (2E)-hexadecenedioyl-CoA + H2O2. It catalyses the reaction tetracosanoyl-CoA + O2 = (2E)-tetracosenoyl-CoA + H2O2. The catalysed reaction is glutaryl-CoA + O2 = (2E)-glutaconyl-CoA + H2O2. The enzyme catalyses hexanoyl-CoA + O2 = (2E)-hexenoyl-CoA + H2O2. It carries out the reaction octadecanoyl-CoA + O2 = (2E)-octadecenoyl-CoA + H2O2. It catalyses the reaction (5Z,8Z,11Z,14Z,17Z)-eicosapentaenoyl-CoA + O2 = (2E,5Z,8Z,11Z,14Z,17Z)-icosahexaenoyl-CoA + H2O2. The catalysed reaction is (6Z,9Z,12Z,15Z,18Z,21Z)-tetracosahexaenoyl-CoA + O2 = (2E,6Z,9Z,12Z,15Z,18Z,21Z)-tetracosaheptaenoyl-CoA + H2O2. It functions in the pathway lipid metabolism; peroxisomal fatty acid beta-oxidation. Its function is as follows. Involved in the initial and rate-limiting step of peroxisomal beta-oxidation of straight-chain saturated and unsaturated very-long-chain fatty acids. Catalyzes the desaturation of fatty acyl-CoAs such as palmitoyl-CoA (hexadecanoyl-CoA) to 2-trans-enoyl-CoAs ((2E)-enoyl-CoAs) such as (2E)-hexadecenoyl-CoA, and donates electrons directly to molecular oxygen (O(2)), thereby producing hydrogen peroxide (H(2)O(2)). Shows highest activity against medium-chain fatty acyl-CoAs. Shows optimum activity with a chain length of 10 carbons (decanoyl-CoA) in vitro. Functionally, is active against a much broader range of substrates and shows activity towards long-chain acyl-CoAs. The sequence is that of Peroxisomal acyl-coenzyme A oxidase 1 from Mus musculus (Mouse).